A 59-amino-acid polypeptide reads, in one-letter code: Temporin-HN2 (59 aa).

Residues 1–22 (MFTLKKSLLLLLFLGTINLSLS) form the signal peptide. Residues 16-44 (TINLSLSEQERDAKEERRDEMDVEVEKRN) adopt a coiled-coil conformation. Positions 23–41 (EQERDAKEERRDEMDVEVE) are excised as a propeptide. Leucine 57 is subject to Leucine amide.

As to expression, expressed by the skin glands.

The protein resides in the secreted. Its function is as follows. Has antimicrobial activity against some Gram-positive bacteria and fungi but has no activity against a range of Gram-negative bacteria except P.faecalis. Active against the Gram-positive bacteria S.aureus ATCC 25923 (MIC=4.8 uM), S.carnosus KHS (MIC=19 uM), B.licheniformis X39 (MIC=19 uM) and R.rhodochrous X15 (MIC=2.4 uM) but is inactive against E.faecium 091299 and E.faecalis 981. Has a less potent antimicrobial activity against the Gram-negative bacterium P.faecalis X29 (MIC=37.5 uM) and is inactive against E.coli, P.aeruginosa and S.typhi. Has antifungal activity against C.albicans ATCC 2002 (MIC=9.5 uM) and is also active against the slime mold 090223 (MIC=9.5 uM). Has extremely low hemolytic activity against human erythrocytes (LC(50)=300 uM). The chain is Temporin-HN2 from Odorrana hainanensis (Odor frog).